The primary structure comprises 299 residues: MKRQLEAYCAHLRNERQVSEHTSQGYRRDLEKVIAYCEEHGIADWQALQIQQLRQLIARLHHHGQSPRSLARLLSAVRGLYRYLNREGLCQHDPANGLSAPKGERRLPKVLDTDRALQLLDGGVDDDFIARRDQAILELFYSSGLRLSELTNLDLDHLDLAAGLVQVLGKGGKARVLPVGRKAREALQAWYRLRGIGNPRDRAVFITRQGNRISPRAVRLRVKVAGERELGQHLHPHMLRHSFASHVLESSQDLRAVQEMLGHADISTTQIYTHLDFQHLAAVYDSAHPRAKRSKGTDS.

The region spanning 1 to 85 (MKRQLEAYCA…AVRGLYRYLN (85 aa)) is the Core-binding (CB) domain. One can recognise a Tyr recombinase domain in the interval 106–285 (RLPKVLDTDR…DFQHLAAVYD (180 aa)). Catalysis depends on residues Arg146, Lys170, His237, Arg240, and His263. The O-(3'-phospho-DNA)-tyrosine intermediate role is filled by Tyr272.

This sequence belongs to the 'phage' integrase family. XerC subfamily. As to quaternary structure, forms a cyclic heterotetrameric complex composed of two molecules of XerC and two molecules of XerD.

It is found in the cytoplasm. Its function is as follows. Site-specific tyrosine recombinase, which acts by catalyzing the cutting and rejoining of the recombining DNA molecules. The XerC-XerD complex is essential to convert dimers of the bacterial chromosome into monomers to permit their segregation at cell division. It also contributes to the segregational stability of plasmids. The sequence is that of Tyrosine recombinase XerC from Pseudomonas putida (strain ATCC 47054 / DSM 6125 / CFBP 8728 / NCIMB 11950 / KT2440).